Here is a 289-residue protein sequence, read N- to C-terminus: tRNA pseudouridine synthase B (289 aa).

Asp-38 serves as the catalytic Nucleophile.

The protein belongs to the pseudouridine synthase TruB family. Type 1 subfamily.

It carries out the reaction uridine(55) in tRNA = pseudouridine(55) in tRNA. Responsible for synthesis of pseudouridine from uracil-55 in the psi GC loop of transfer RNAs. The sequence is that of tRNA pseudouridine synthase B from Clostridium acetobutylicum (strain ATCC 824 / DSM 792 / JCM 1419 / IAM 19013 / LMG 5710 / NBRC 13948 / NRRL B-527 / VKM B-1787 / 2291 / W).